A 346-amino-acid chain; its full sequence is Magnesium-chelatase 38 kDa subunit (346 aa).

Glycine 34–serine 41 is a binding site for ATP.

Belongs to the Mg-chelatase subunits D/I family.

The catalysed reaction is protoporphyrin IX + Mg(2+) + ATP + H2O = Mg-protoporphyrin IX + ADP + phosphate + 3 H(+). Its pathway is porphyrin-containing compound metabolism; bacteriochlorophyll biosynthesis. Its function is as follows. Involved in bacteriochlorophyll biosynthesis; introduces a magnesium ion into protoporphyrin IX to yield Mg-protoporphyrin IX. This chain is Magnesium-chelatase 38 kDa subunit (bchI), found in Chlorobaculum parvum (strain DSM 263 / NCIMB 8327) (Chlorobium vibrioforme subsp. thiosulfatophilum).